The chain runs to 60 residues: uncharacterized protein (60 aa).

This sequence to E.coli YjeQ and H.influenzae HI_1714.

This is an uncharacterized protein from Azotobacter vinelandii.